Consider the following 420-residue polypeptide: Gamma-glutamyl phosphate reductase (420 aa).

The protein belongs to the gamma-glutamyl phosphate reductase family.

The protein localises to the cytoplasm. The enzyme catalyses L-glutamate 5-semialdehyde + phosphate + NADP(+) = L-glutamyl 5-phosphate + NADPH + H(+). It functions in the pathway amino-acid biosynthesis; L-proline biosynthesis; L-glutamate 5-semialdehyde from L-glutamate: step 2/2. Its function is as follows. Catalyzes the NADPH-dependent reduction of L-glutamate 5-phosphate into L-glutamate 5-semialdehyde and phosphate. The product spontaneously undergoes cyclization to form 1-pyrroline-5-carboxylate. In Cereibacter sphaeroides (strain ATCC 17029 / ATH 2.4.9) (Rhodobacter sphaeroides), this protein is Gamma-glutamyl phosphate reductase.